Reading from the N-terminus, the 136-residue chain is MLQPKRTKFRKMHKGRNRGLAQGTDVSFGSFGLKAVGRGRLTARQIEAARRAMTRAVKRQGKIWIRVFPDKPITEKPLAVRMGKGKGNVEYWVALIQPGKVLYEMDGVPEELAREAFKLAAAKLPIKTTFVTKTVM.

The protein belongs to the universal ribosomal protein uL16 family. As to quaternary structure, part of the 50S ribosomal subunit.

Functionally, binds 23S rRNA and is also seen to make contacts with the A and possibly P site tRNAs. The polypeptide is Large ribosomal subunit protein uL16 (Citrobacter koseri (strain ATCC BAA-895 / CDC 4225-83 / SGSC4696)).